Reading from the N-terminus, the 260-residue chain is 3'-5' ssDNA/RNA exonuclease TatD (260 aa).

A divalent metal cation is bound by residues E92, H128, and H153.

Belongs to the metallo-dependent hydrolases superfamily. TatD-type hydrolase family. TatD subfamily. As to quaternary structure, monomer. The cofactor is Mg(2+).

The protein localises to the cytoplasm. Functionally, 3'-5' exonuclease that prefers single-stranded DNA and RNA. May play a role in the H(2)O(2)-induced DNA damage repair. The polypeptide is 3'-5' ssDNA/RNA exonuclease TatD (Pantoea sp. (strain At-9b)).